A 305-amino-acid chain; its full sequence is NAD kinase 2 (305 aa).

Catalysis depends on Asp78, which acts as the Proton acceptor. NAD(+)-binding positions include 78 to 79 (DG), 152 to 153 (NE), Asp182, 193 to 198 (TAYSLS), and Asn251.

Belongs to the NAD kinase family. Requires a divalent metal cation as cofactor.

The protein resides in the cytoplasm. The enzyme catalyses NAD(+) + ATP = ADP + NADP(+) + H(+). Its function is as follows. Involved in the regulation of the intracellular balance of NAD and NADP, and is a key enzyme in the biosynthesis of NADP. Catalyzes specifically the phosphorylation on 2'-hydroxyl of the adenosine moiety of NAD to yield NADP. The protein is NAD kinase 2 of Trichormus variabilis (strain ATCC 29413 / PCC 7937) (Anabaena variabilis).